We begin with the raw amino-acid sequence, 129 residues long: Small ribosomal subunit protein uS11 (129 aa).

The protein belongs to the universal ribosomal protein uS11 family. In terms of assembly, part of the 30S ribosomal subunit. Interacts with proteins S7 and S18. Binds to IF-3.

Its function is as follows. Located on the platform of the 30S subunit, it bridges several disparate RNA helices of the 16S rRNA. Forms part of the Shine-Dalgarno cleft in the 70S ribosome. This is Small ribosomal subunit protein uS11 from Dinoroseobacter shibae (strain DSM 16493 / NCIMB 14021 / DFL 12).